The sequence spans 134 residues: Thioredoxin-like protein Clot (134 aa).

The region spanning 1-134 (MTLKKVDANP…LILPLLAPST (134 aa)) is the Thioredoxin domain. Catalysis depends on nucleophile residues cysteine 48 and cysteine 51. A disulfide bridge connects residues cysteine 48 and cysteine 51.

Belongs to the thioredoxin family.

Functionally, probable thiol-disulfide oxidoreductase that may participate in various redox reactions. This chain is Thioredoxin-like protein Clot, found in Arabidopsis thaliana (Mouse-ear cress).